Reading from the N-terminus, the 406-residue chain is Probable endo-xylogalacturonan hydrolase A (406 aa).

Residues 1–18 form the signal peptide; that stretch reads MLYPRNLALFSLLSLSSA. 4 PbH1 repeats span residues 183–213, 214–235, 237–257, and 299–320; these read TQHVTFKNLRMDATSNSQNPPKNTDGFDIGA, STHVTISSVSVTNDDDCVAFKP, SNYVTVEDVTCTGSHGISVGS, and VKNVTFSDFNVRGCDYAFQIES. Catalysis depends on D228, which acts as the Proton donor. Residue H251 is part of the active site. Residue N301 is glycosylated (N-linked (GlcNAc...) asparagine).

It belongs to the glycosyl hydrolase 28 family.

Its subcellular location is the secreted. Pectinolytic enzyme involved in the degradation of xylogalacturonan (xga), a galacturonan backbone heavily substituted with xylose, and which is one important component of the hairy regions of pectin. Activity requires a galacturonic acid backbone substituted with xylose. This Aspergillus fumigatus (strain ATCC MYA-4609 / CBS 101355 / FGSC A1100 / Af293) (Neosartorya fumigata) protein is Probable endo-xylogalacturonan hydrolase A (xghA).